The primary structure comprises 198 residues: uncharacterized protein (198 aa).

The protein to A.aeolicus aq_1211 and aq_1583.

This is an uncharacterized protein from Aquifex aeolicus (strain VF5).